The chain runs to 407 residues: Peptidase T (407 aa).

Residue His77 participates in Zn(2+) binding. Residue Asp79 is part of the active site. Asp140 contributes to the Zn(2+) binding site. The active-site Proton acceptor is the Glu174. Zn(2+) is bound by residues Glu175, Asp197, and His379.

It belongs to the peptidase M20B family. Requires Zn(2+) as cofactor.

The protein resides in the cytoplasm. It carries out the reaction Release of the N-terminal residue from a tripeptide.. Its function is as follows. Cleaves the N-terminal amino acid of tripeptides. The polypeptide is Peptidase T (Bacteroides fragilis (strain YCH46)).